Reading from the N-terminus, the 130-residue chain is DNA-directed RNA polymerase subunit omega (130 aa).

Residues 108-130 are disordered; sequence TEEELLKGLEGLAPPEEQPEEDE.

Belongs to the RNA polymerase subunit omega family. The RNAP catalytic core consists of 2 alpha, 1 beta, 1 beta' and 1 omega subunit. When a sigma factor is associated with the core the holoenzyme is formed, which can initiate transcription.

It carries out the reaction RNA(n) + a ribonucleoside 5'-triphosphate = RNA(n+1) + diphosphate. Promotes RNA polymerase assembly. Latches the N- and C-terminal regions of the beta' subunit thereby facilitating its interaction with the beta and alpha subunits. This is DNA-directed RNA polymerase subunit omega from Rhodopseudomonas palustris (strain ATCC BAA-98 / CGA009).